The primary structure comprises 812 residues: Protein FAM83G (812 aa).

N-acetylalanine is present on A2. Residues 2-312 (AFSQVQCLDD…LYLMSQSVSL (311 aa)) are DUF1669. S4 bears the Phosphoserine mark. Residues 76 to 119 (PGSEDPRVSGRRPEPQDNGGADASEETSAAGGPPATETLPSLEY) are disordered. Basic and acidic residues predominate over residues 79–90 (EDPRVSGRRPEP). Phosphoserine is present on residues S124, S127, and S356. 3 disordered regions span residues 362 to 389 (KSSS…GDLS), 455 to 509 (ASAQ…KPRT), and 521 to 812 (SDIG…HKEP). Residues 455 to 467 (ASAQHQLWKQSQG) show a composition bias toward polar residues. The segment covering 471-480 (CPAPCPPPAP) has biased composition (pro residues). A compositionally biased stretch (polar residues) spans 545-562 (STASESEVPQQQHSSMTQ). Residues 576–586 (LDEDEDDDDDY) are compositionally biased toward acidic residues. Over residues 589–598 (LSDQDSLSGS) the composition is skewed to low complexity. Phosphoserine occurs at positions 609, 613, 615, and 649. Positions 721-731 (SSSKKASPAAA) are enriched in low complexity. The span at 761 to 772 (LRAELRATEEHA) shows a compositional bias: basic and acidic residues.

This sequence belongs to the FAM83 family. Interacts with SMAD1 (via MH2 domain); in a SMAD4-independent manner. Directly interacts (via DUF1669) with casein kinase isoforms CSNK1A1 and CSNK1A1L. BMP signaling induces the phosphorylation by BMPR1A at Ser-609, Ser-613 and Ser-615. Phosphorylation at Ser-609 is necessary for the activation of SMAD4-independent BMP target genes such as NEDD9 and ASNS. In terms of processing, phosphorylated by CSNK1A1.

The protein localises to the cytoplasm. The protein resides in the cytosol. It is found in the nucleus. Substrate for type I BMP receptor kinase involved in regulation of some target genes of the BMP signaling pathway. Also regulates the expression of several non-BMP target genes, suggesting a role in other signaling pathways. This chain is Protein FAM83G (Fam83g), found in Mus musculus (Mouse).